The chain runs to 530 residues: MTKYVFVTGGVVSSLGKGIVAASLGRLLKNRGLKVTIQKFDPYINVDPGTMSPYQHGEVFVTDDGTETDLDLGHYERFIDNNLNKYSNVTTGKIYSEVLRKERKGEYLGATVQVIPHITNMIKEKIMRAATTTDSDIVITEIGGTVGDIESLPFLEALRQMKADVGAENCIYIHTTLVPYLKAAGEMKTKPTQHSVKELRGIGIQPNVLVCRTEKAIPDDMRNKIAQFCDVEPEAVVESRDAESIYDIPLLLKNQGLDDFVLNHFKMTAPEADMTEWIDMLHTIKNLEGTKKIALVGKYIELQDAYISVNEALRHAGYVYNTDVKVTPIQSEDITKENVAETLAGFDGIIVPGGFGDRGLEGMILSIQYARENDVPYLGICLGMQMASIEFARNVAGITDATTGEVHPDAEHKLIDIMSDQKDLENMGGTQRLGLYPCKLKPGTKTAEAYDNQSVIQQRHRHRYEFNNEYRDLLTDKGLVFAGTSPDNRLVEVIEIPENKFFVAAQYHPEFLSRPNKPEGLFKAFIGATM.

Positions 1-267 are amidoligase domain; that stretch reads MTKYVFVTGG…DDFVLNHFKM (267 aa). A CTP-binding site is contributed by S13. S13 is a UTP binding site. An ATP-binding site is contributed by 14–19; sequence SLGKGI. Residue Y54 participates in L-glutamine binding. D71 is an ATP binding site. Mg(2+) contacts are provided by D71 and E141. CTP is bound by residues 148-150, 188-193, and K224; these read DIE and KTKPTQ. UTP-binding positions include 188 to 193 and K224; that span reads KTKPTQ. Residue 240-242 coordinates ATP; the sequence is RDA. Residues 292-530 form the Glutamine amidotransferase type-1 domain; the sequence is KIALVGKYIE…LFKAFIGATM (239 aa). G354 is a binding site for L-glutamine. Residue C381 is the Nucleophile; for glutamine hydrolysis of the active site. L-glutamine contacts are provided by residues 382–385, E405, and R463; that span reads LGMQ. Catalysis depends on residues H508 and E510.

This sequence belongs to the CTP synthase family. In terms of assembly, homotetramer.

The enzyme catalyses UTP + L-glutamine + ATP + H2O = CTP + L-glutamate + ADP + phosphate + 2 H(+). The catalysed reaction is L-glutamine + H2O = L-glutamate + NH4(+). It carries out the reaction UTP + NH4(+) + ATP = CTP + ADP + phosphate + 2 H(+). It functions in the pathway pyrimidine metabolism; CTP biosynthesis via de novo pathway; CTP from UDP: step 2/2. Its activity is regulated as follows. Allosterically activated by GTP, when glutamine is the substrate; GTP has no effect on the reaction when ammonia is the substrate. The allosteric effector GTP functions by stabilizing the protein conformation that binds the tetrahedral intermediate(s) formed during glutamine hydrolysis. Inhibited by the product CTP, via allosteric rather than competitive inhibition. Its function is as follows. Catalyzes the ATP-dependent amination of UTP to CTP with either L-glutamine or ammonia as the source of nitrogen. Regulates intracellular CTP levels through interactions with the four ribonucleotide triphosphates. This Latilactobacillus sakei subsp. sakei (strain 23K) (Lactobacillus sakei subsp. sakei) protein is CTP synthase.